The chain runs to 754 residues: RNA-directed RNA polymerase catalytic subunit (754 aa).

Short sequence motifs (nuclear localization signal) lie at residues 189–197 (VVRREKDKR) and 205–218 (KVPVMGIDSIKHDE). A promoter-binding site region spans residues 251-258 (RPFSKIVE). In terms of domain architecture, RdRp catalytic spans 288–484 (VTSLNARMNS…GINMSLEKSY (197 aa)).

This sequence belongs to the influenza viruses polymerase PB1 family. Influenza RNA polymerase is composed of three subunits: PB1, PB2 and PA. Interacts (via N-terminus) with PA (via C-terminus). Interacts (via C-terminus) with PB2 (via N-terminus); this interaction is essential for transcription initiation. Phosphorylated by host PRKCA.

The protein localises to the host nucleus. The protein resides in the host cytoplasm. It catalyses the reaction RNA(n) + a ribonucleoside 5'-triphosphate = RNA(n+1) + diphosphate. Its function is as follows. RNA-dependent RNA polymerase which is responsible for replication and transcription of virus RNA segments. The transcription of viral mRNAs occurs by a unique mechanism called cap-snatching. 5' methylated caps of cellular mRNAs are cleaved after 10-13 nucleotides by PA. In turn, these short capped RNAs are used as primers by PB1 for transcription of viral mRNAs. During virus replication, PB1 initiates RNA synthesis and copy vRNA into complementary RNA (cRNA) which in turn serves as a template for the production of more vRNAs. This Influenza C virus (strain C/Johannesburg/1/1966) protein is RNA-directed RNA polymerase catalytic subunit.